A 233-amino-acid chain; its full sequence is Hydroxyacylglutathione hydrolase (233 aa).

His52, His54, Asp56, His57, His108, Asp125, and His163 together coordinate Zn(2+).

It belongs to the metallo-beta-lactamase superfamily. Glyoxalase II family. Monomer. The cofactor is Zn(2+).

It catalyses the reaction an S-(2-hydroxyacyl)glutathione + H2O = a 2-hydroxy carboxylate + glutathione + H(+). The protein operates within secondary metabolite metabolism; methylglyoxal degradation; (R)-lactate from methylglyoxal: step 2/2. In terms of biological role, thiolesterase that catalyzes the hydrolysis of S-D-lactoyl-glutathione to form glutathione and D-lactic acid. The sequence is that of Hydroxyacylglutathione hydrolase from Pasteurella multocida (strain Pm70).